Here is a 238-residue protein sequence, read N- to C-terminus: uncharacterized protein (238 aa).

A run of 7 helical transmembrane segments spans residues 15–37 (FGALHFAIASVAVLLSALFVLLP), 50–69 (ARAGVAILFLRLGLMLCGTL), 79–96 (LPFHLCPAALISGSLYFI), 101–118 (IFFNLLYFWHFGSFVAVL), 128–150 (ILYAYLFMLTHCLEPAMVVFSLL), 163–183 (CAVLGFLLLAANALFWNRRLG), and 203–225 (FFVYQLLFVSALCLLMLVLYLPF).

The protein localises to the cell membrane. This is an uncharacterized protein from Treponema pallidum (strain Nichols).